A 253-amino-acid chain; its full sequence is 20 kDa chaperonin, chloroplastic (253 aa).

A chloroplast-targeting transit peptide spans 1–50 (MAATQLTASPVTMSARSLASLDGLRASSVKFSSLKPGTLRQSQFRRLVVK). Cpn-10 domain stretches follow at residues 60–153 (TSIK…GILE) and 159–252 (DLKP…MAIL). T212 carries the post-translational modification Phosphothreonine.

This sequence belongs to the GroES chaperonin family. Homotetramer. Forms stable complexes with CPN60 in the presence of ATP. Interacts with FSD1. Interacts with CLPT1 and CLPT2. Interacts with CHLH. Interacts with SPY. In terms of tissue distribution, ubiquitous. Most abundant in leaves and inflorescence. Low levels found in roots.

The protein resides in the plastid. The protein localises to the chloroplast. Functionally, seems to function only as a co-chaperone, along with CPN60, and in certain cases is essential for the discharge of biologically active proteins from CPN60. Required to activate the iron superoxide dismutases (FeSOD). Involved in abscisic acid (ABA) signaling, independently of its co-chaperone role. Acts as a negative regulator of the CHLH-WRKY40 coupled ABA signaling pathway, downstream of CHLH and upstream of WRKY40. This is 20 kDa chaperonin, chloroplastic (CPN20) from Arabidopsis thaliana (Mouse-ear cress).